Here is a 118-residue protein sequence, read N- to C-terminus: uncharacterized protein (118 aa).

Transmembrane regions (helical) follow at residues 5-25 (AFFN…SMVI) and 40-57 (FLTF…QHYI).

The protein localises to the membrane. This is an uncharacterized protein from African swine fever virus (strain Badajoz 1971 Vero-adapted) (Ba71V).